The primary structure comprises 386 residues: Eukaryotic translation initiation factor 3 subunit M (386 aa).

The PCI domain occupies 181–343; the sequence is NSELASKVMI…RKVHISSTMH (163 aa).

This sequence belongs to the eIF-3 subunit M family. In terms of assembly, component of the eukaryotic translation initiation factor 3 (eIF-3) complex.

The protein localises to the cytoplasm. In terms of biological role, component of the eukaryotic translation initiation factor 3 (eIF-3) complex, which is involved in protein synthesis of a specialized repertoire of mRNAs and, together with other initiation factors, stimulates binding of mRNA and methionyl-tRNAi to the 40S ribosome. The eIF-3 complex specifically targets and initiates translation of a subset of mRNAs involved in cell proliferation. This chain is Eukaryotic translation initiation factor 3 subunit M, found in Aedes aegypti (Yellowfever mosquito).